The primary structure comprises 129 residues: NADH-quinone oxidoreductase subunit A (129 aa).

3 helical membrane-spanning segments follow: residues 14–34 (LAIHVALSAGIVAAIIGVAAV), 67–87 (FLIAALFVIFDMEAAILFAWA), and 97–117 (GLIEAAIFIGVLLLALVYLWI).

It belongs to the complex I subunit 3 family. As to quaternary structure, NDH-1 is composed of 14 different subunits. Subunits NuoA, H, J, K, L, M, N constitute the membrane sector of the complex.

It localises to the cell inner membrane. The catalysed reaction is a quinone + NADH + 5 H(+)(in) = a quinol + NAD(+) + 4 H(+)(out). Its function is as follows. NDH-1 shuttles electrons from NADH, via FMN and iron-sulfur (Fe-S) centers, to quinones in the respiratory chain. The immediate electron acceptor for the enzyme in this species is believed to be ubiquinone. Couples the redox reaction to proton translocation (for every two electrons transferred, four hydrogen ions are translocated across the cytoplasmic membrane), and thus conserves the redox energy in a proton gradient. This chain is NADH-quinone oxidoreductase subunit A, found in Rhodopseudomonas palustris (strain BisB18).